The chain runs to 349 residues: MTNITLQKQHRTLWHFIPGLALSAVITGVALWGGSIPAVAGAGFSALTLAILLGMVLGNTIYPHIWKSCDGGVLFAKQYLLRLGIILYGFRLTFSQIADVGISGIIIDVLTLSSTFLLACFLGQKVFGLDKHTSWLIGAGSSICGAAAVLATEPVVKAEASKVTVAVATVVIFGTVAIFLYPAIYPLMSQWFSPETFGIYIGSTVHEVAQVVAAGHAISPDAENAAVISKMLRVMMLAPFLILLAARVKQLSGTNSGEKSKITIPWFAILFIVVAIFNSFHLLPQSVVNMLVTLDTFLLAMAMAALGLTTHVSALKKAGAKPLLMALVLFAWLIVGGGAINYVIQSVIA.

Over 1–12 the chain is Periplasmic; that stretch reads MTNITLQKQHRT. A helical membrane pass occupies residues 13–32; that stretch reads LWHFIPGLALSAVITGVALW. The Cytoplasmic segment spans residues 33-35; sequence GGS. Residues 36-58 traverse the membrane as a helical segment; it reads IPAVAGAGFSALTLAILLGMVLG. At 59–99 the chain is on the periplasmic side; sequence NTIYPHIWKSCDGGVLFAKQYLLRLGIILYGFRLTFSQIAD. Residues 100 to 122 form a helical membrane-spanning segment; it reads VGISGIIIDVLTLSSTFLLACFL. Over 123 to 131 the chain is Cytoplasmic; sequence GQKVFGLDK. Residues 132 to 151 form a helical membrane-spanning segment; that stretch reads HTSWLIGAGSSICGAAAVLA. Residues 152-162 are Periplasmic-facing; the sequence is TEPVVKAEASK. Residues 163–185 form a helical membrane-spanning segment; it reads VTVAVATVVIFGTVAIFLYPAIY. At 186-261 the chain is on the cytoplasmic side; it reads PLMSQWFSPE…SGTNSGEKSK (76 aa). Residues 262-283 traverse the membrane as a helical segment; sequence ITIPWFAILFIVVAIFNSFHLL. Topologically, residues 284 to 289 are periplasmic; that stretch reads PQSVVN. Residues 290–312 traverse the membrane as a helical segment; sequence MLVTLDTFLLAMAMAALGLTTHV. Over 313 to 321 the chain is Cytoplasmic; that stretch reads SALKKAGAK. Residues 322 to 344 form a helical membrane-spanning segment; it reads PLLMALVLFAWLIVGGGAINYVI. Topologically, residues 345 to 349 are periplasmic; that stretch reads QSVIA.

This sequence belongs to the UPF0324 family.

The protein localises to the cell inner membrane. The chain is UPF0324 inner membrane protein YeiH (yeiH) from Escherichia coli O6:H1 (strain CFT073 / ATCC 700928 / UPEC).